A 127-amino-acid polypeptide reads, in one-letter code: uncharacterized protein (127 aa).

2 helical membrane passes run 64-84 and 101-118; these read GYYITNLICIVVGLFLYFGYL and FFHFFFTILAVTSRAIYY.

The protein resides in the membrane. This is an uncharacterized protein from Saccharomyces cerevisiae (strain ATCC 204508 / S288c) (Baker's yeast).